Consider the following 292-residue polypeptide: 4-hydroxy-tetrahydrodipicolinate synthase (292 aa).

Thr45 is a pyruvate binding site. Tyr133 (proton donor/acceptor) is an active-site residue. Catalysis depends on Lys161, which acts as the Schiff-base intermediate with substrate. Ile203 is a binding site for pyruvate.

It belongs to the DapA family. In terms of assembly, homotetramer; dimer of dimers.

Its subcellular location is the cytoplasm. It catalyses the reaction L-aspartate 4-semialdehyde + pyruvate = (2S,4S)-4-hydroxy-2,3,4,5-tetrahydrodipicolinate + H2O + H(+). It participates in amino-acid biosynthesis; L-lysine biosynthesis via DAP pathway; (S)-tetrahydrodipicolinate from L-aspartate: step 3/4. Functionally, catalyzes the condensation of (S)-aspartate-beta-semialdehyde [(S)-ASA] and pyruvate to 4-hydroxy-tetrahydrodipicolinate (HTPA). The chain is 4-hydroxy-tetrahydrodipicolinate synthase from Nitrosomonas eutropha (strain DSM 101675 / C91 / Nm57).